Reading from the N-terminus, the 181-residue chain is Alkyl hydroperoxide reductase AhpD (181 aa).

Cys131 serves as the catalytic Proton donor. A disulfide bridge connects residues Cys131 and Cys134. Residue Cys134 is the Cysteine sulfenic acid (-SOH) intermediate of the active site.

The protein belongs to the AhpD family.

It catalyses the reaction N(6)-[(R)-dihydrolipoyl]-L-lysyl-[lipoyl-carrier protein] + a hydroperoxide = N(6)-[(R)-lipoyl]-L-lysyl-[lipoyl-carrier protein] + an alcohol + H2O. Antioxidant protein with alkyl hydroperoxidase activity. Required for the reduction of the AhpC active site cysteine residues and for the regeneration of the AhpC enzyme activity. In Azorhizobium caulinodans (strain ATCC 43989 / DSM 5975 / JCM 20966 / LMG 6465 / NBRC 14845 / NCIMB 13405 / ORS 571), this protein is Alkyl hydroperoxide reductase AhpD.